We begin with the raw amino-acid sequence, 154 residues long: Prefoldin subunit 5 (154 aa).

Ala2 is modified (N-acetylalanine). Residue Lys42 is modified to N6-acetyllysine. Ser56 bears the Phosphoserine mark.

Belongs to the prefoldin subunit alpha family. In terms of assembly, heterohexamer of two PFD-alpha type and four PFD-beta type subunits. Binds to MYC; interacts with its N-terminal domain. In terms of tissue distribution, highly expressed in pancreas and skeletal muscle and moderately in other tissues.

The protein resides in the nucleus. The protein localises to the cytoplasm. In terms of biological role, binds specifically to cytosolic chaperonin (c-CPN) and transfers target proteins to it. Binds to nascent polypeptide chain and promotes folding in an environment in which there are many competing pathways for nonnative proteins. Represses the transcriptional activity of MYC. The polypeptide is Prefoldin subunit 5 (PFDN5) (Homo sapiens (Human)).